The primary structure comprises 276 residues: Halorhodopsin (276 aa).

A propeptide spanning residues 1–20 (MTAASTTATTVLQATQSDVL) is cleaved from the precursor. Gln21 is subject to Pyrrolidone carboxylic acid. Helical transmembrane passes span 31–51 (SSIW…VAMG), 61–81 (LIWV…AGLA), 109–129 (YLTW…LADT), 134–154 (LFTA…AALI), 162–182 (WVFY…LLVQ), 195–215 (IFGT…ILWA), and 220–240 (GVAL…DILA). Lys241 bears the N6-(retinylidene)lysine mark.

This sequence belongs to the archaeal/bacterial/fungal opsin family. The covalent binding of retinal to the apoprotein, bacterioopsin, generates bacteriorhodopsin.

The protein resides in the membrane. Light-driven chloride pump. This chain is Halorhodopsin (hop), found in Haloarcula marismortui (strain ATCC 43049 / DSM 3752 / JCM 8966 / VKM B-1809) (Halobacterium marismortui).